We begin with the raw amino-acid sequence, 114 residues long: UPF0342 protein LSL_0473 (114 aa).

It belongs to the UPF0342 family.

The chain is UPF0342 protein LSL_0473 from Ligilactobacillus salivarius (strain UCC118) (Lactobacillus salivarius).